The primary structure comprises 324 residues: CYFIP-related Rac1 interactor B (324 aa).

Gly2 is lipidated: N-myristoyl glycine. A Glycyl lysine isopeptide (Lys-Gly) (interchain with G-Cter in ubiquitin) cross-link involves residue Lys74.

The protein belongs to the CYRI family. In terms of assembly, interacts with RAC1 (GTP-bound form preferentially). Post-translationally, ubiquitinated at Lys-74 upon Salmonella bacterial infection. In terms of tissue distribution, expressed in pancreatic ducts (at protein level).

The protein resides in the membrane. Its subcellular location is the mitochondrion. Its function is as follows. Negatively regulates RAC1 signaling and RAC1-driven cytoskeletal remodeling. Regulates chemotaxis, cell migration and epithelial polarization by controlling the polarity, plasticity, duration and extent of protrusions. Limits Rac1 mediated activation of the Scar/WAVE complex, focuses protrusion signals and regulates pseudopod complexity by inhibiting Scar/WAVE-induced actin polymerization. Protects against Salmonella bacterial infection. Attenuates processes such as macropinocytosis, phagocytosis and cell migration and restrict sopE-mediated bacterial entry. Also restricts infection mediated by Mycobacterium tuberculosis and Listeria monocytogenes. Involved in the regulation of mitochondrial dynamics and oxidative stress. The polypeptide is CYFIP-related Rac1 interactor B (Cyrib) (Mus musculus (Mouse)).